Consider the following 192-residue polypeptide: Epoxyqueuosine reductase QueH (192 aa).

[4Fe-4S] cluster is bound by residues Cys9, Cys10, Cys87, and Cys90. Cys169 and Cys171 are oxidised to a cystine.

This sequence belongs to the QueH family.

It catalyses the reaction epoxyqueuosine(34) in tRNA + AH2 = queuosine(34) in tRNA + A + H2O. It participates in tRNA modification; tRNA-queuosine biosynthesis. Functionally, catalyzes the conversion of epoxyqueuosine (oQ) to queuosine (Q), which is a hypermodified base found in the wobble positions of tRNA(Asp), tRNA(Asn), tRNA(His) and tRNA(Tyr). In Thermotoga maritima (strain ATCC 43589 / DSM 3109 / JCM 10099 / NBRC 100826 / MSB8), this protein is Epoxyqueuosine reductase QueH.